The following is a 241-amino-acid chain: Carboxy-S-adenosyl-L-methionine synthase (241 aa).

Residues Y38, 63–65, 88–89, 116–117, N131, and R198 contribute to the S-adenosyl-L-methionine site; these read GCS, DN, and DI.

This sequence belongs to the class I-like SAM-binding methyltransferase superfamily. Cx-SAM synthase family. As to quaternary structure, homodimer.

It catalyses the reaction prephenate + S-adenosyl-L-methionine = carboxy-S-adenosyl-L-methionine + 3-phenylpyruvate + H2O. Catalyzes the conversion of S-adenosyl-L-methionine (SAM) to carboxy-S-adenosyl-L-methionine (Cx-SAM). This chain is Carboxy-S-adenosyl-L-methionine synthase, found in Glaesserella parasuis serovar 5 (strain SH0165) (Haemophilus parasuis).